We begin with the raw amino-acid sequence, 104 residues long: Pyrimidine/purine nucleoside phosphorylase (104 aa).

The protein belongs to the nucleoside phosphorylase PpnP family.

It carries out the reaction a purine D-ribonucleoside + phosphate = a purine nucleobase + alpha-D-ribose 1-phosphate. The catalysed reaction is adenosine + phosphate = alpha-D-ribose 1-phosphate + adenine. The enzyme catalyses cytidine + phosphate = cytosine + alpha-D-ribose 1-phosphate. It catalyses the reaction guanosine + phosphate = alpha-D-ribose 1-phosphate + guanine. It carries out the reaction inosine + phosphate = alpha-D-ribose 1-phosphate + hypoxanthine. The catalysed reaction is thymidine + phosphate = 2-deoxy-alpha-D-ribose 1-phosphate + thymine. The enzyme catalyses uridine + phosphate = alpha-D-ribose 1-phosphate + uracil. It catalyses the reaction xanthosine + phosphate = alpha-D-ribose 1-phosphate + xanthine. Catalyzes the phosphorolysis of diverse nucleosides, yielding D-ribose 1-phosphate and the respective free bases. Can use uridine, adenosine, guanosine, cytidine, thymidine, inosine and xanthosine as substrates. Also catalyzes the reverse reactions. This is Pyrimidine/purine nucleoside phosphorylase from Pelobacter propionicus (strain DSM 2379 / NBRC 103807 / OttBd1).